The following is a 475-amino-acid chain: 3-hydroxyadipyl-CoA dehydrogenase (475 aa).

The protein belongs to the 3-hydroxyacyl-CoA dehydrogenase family. In terms of assembly, homotrimer.

It catalyses the reaction (3S)-3-hydroxyadipyl-CoA + NAD(+) = 3-oxoadipyl-CoA + NADH + H(+). The protein operates within aromatic compound metabolism; phenylacetate degradation. Functionally, catalyzes the oxidation of 3-hydroxyadipyl-CoA to yield 3-oxoadipyl-CoA. This Escherichia coli (strain K12) protein is 3-hydroxyadipyl-CoA dehydrogenase (paaH).